The sequence spans 178 residues: Flagellar transcriptional regulator FlhC (178 aa).

The Zn(2+) site is built by Cys138, Cys141, Cys158, and Cys161.

The protein belongs to the FlhC family. As to quaternary structure, heterohexamer composed of two FlhC and four FlhD subunits. Each FlhC binds a FlhD dimer, forming a heterotrimer, and a hexamer assembles by dimerization of two heterotrimers. It depends on Zn(2+) as a cofactor.

Its subcellular location is the cytoplasm. Functionally, functions in complex with FlhD as a master transcriptional regulator that regulates transcription of several flagellar and non-flagellar operons by binding to their promoter region. Activates expression of class 2 flagellar genes, including fliA, which is a flagellum-specific sigma factor that turns on the class 3 genes. Also regulates genes whose products function in a variety of physiological pathways. The protein is Flagellar transcriptional regulator FlhC of Erwinia tasmaniensis (strain DSM 17950 / CFBP 7177 / CIP 109463 / NCPPB 4357 / Et1/99).